The sequence spans 275 residues: Apoptosis inhibitor 1 (275 aa).

BIR repeat units lie at residues L24–A91 and P126–V193. C163, C166, H183, and C190 together coordinate Zn(2+). An RING-type zinc finger spans residues C227–R263.

In terms of biological role, acts by blocking cellular apoptosis rather than by preventing viral stimulation of apoptosis. The polypeptide is Apoptosis inhibitor 1 (IAP1) (Orgyia pseudotsugata (Douglas-fir tussock moth)).